The primary structure comprises 587 residues: Aspartate--tRNA ligase (587 aa).

Glu174 contacts L-aspartate. The interval 198 to 201 (QITK) is aspartate. Arg220 is a binding site for L-aspartate. ATP-binding positions include 220–222 (RDE) and Gln229. Residue His443 participates in L-aspartate binding. An ATP-binding site is contributed by Glu477. L-aspartate is bound at residue Arg484. 529 to 532 (GLDR) lines the ATP pocket.

The protein belongs to the class-II aminoacyl-tRNA synthetase family. Type 1 subfamily. Homodimer.

Its subcellular location is the cytoplasm. It catalyses the reaction tRNA(Asp) + L-aspartate + ATP = L-aspartyl-tRNA(Asp) + AMP + diphosphate. In terms of biological role, catalyzes the attachment of L-aspartate to tRNA(Asp) in a two-step reaction: L-aspartate is first activated by ATP to form Asp-AMP and then transferred to the acceptor end of tRNA(Asp). In Streptococcus pneumoniae (strain Hungary19A-6), this protein is Aspartate--tRNA ligase.